Here is a 136-residue protein sequence, read N- to C-terminus: NADH-ubiquinone oxidoreductase chain 2 (136 aa).

4 helical membrane passes run 12-32 (YFLI…NQSF), 34-54 (FLIP…MWLV), 74-94 (IGPL…WLMV), and 99-119 (FLLM…AVIL).

The protein belongs to the complex I subunit 2 family.

The protein localises to the mitochondrion inner membrane. It catalyses the reaction a ubiquinone + NADH + 5 H(+)(in) = a ubiquinol + NAD(+) + 4 H(+)(out). In terms of biological role, core subunit of the mitochondrial membrane respiratory chain NADH dehydrogenase (Complex I) that is believed to belong to the minimal assembly required for catalysis. Complex I functions in the transfer of electrons from NADH to the respiratory chain. The immediate electron acceptor for the enzyme is believed to be ubiquinone. This is NADH-ubiquinone oxidoreductase chain 2 (ND2) from Artemia salina (Brine shrimp).